The chain runs to 325 residues: tRNA(Ile)-lysidine synthase (325 aa).

34–39 (SGGADS) is an ATP binding site.

The protein belongs to the tRNA(Ile)-lysidine synthase family.

The protein resides in the cytoplasm. The enzyme catalyses cytidine(34) in tRNA(Ile2) + L-lysine + ATP = lysidine(34) in tRNA(Ile2) + AMP + diphosphate + H(+). Functionally, ligates lysine onto the cytidine present at position 34 of the AUA codon-specific tRNA(Ile) that contains the anticodon CAU, in an ATP-dependent manner. Cytidine is converted to lysidine, thus changing the amino acid specificity of the tRNA from methionine to isoleucine. This is tRNA(Ile)-lysidine synthase from Rhodococcus erythropolis (strain PR4 / NBRC 100887).